A 332-amino-acid chain; its full sequence is D-glutamate N-acetyltransferase (332 aa).

Belongs to the N-acetyltransferase DgcN family.

The enzyme catalyses D-glutamate + acetyl-CoA = N-acetyl-D-glutamate + CoA + H(+). It carries out the reaction D-aspartate + acetyl-CoA = N-acetyl-D-aspartate + CoA + H(+). The catalysed reaction is D-glutamine + acetyl-CoA = N-acetyl-D-glutamine + CoA + H(+). It functions in the pathway amino-acid degradation. In terms of biological role, N-acetyltransferase involved in a deamination-independent D-glutamate degradation pathway, named the DgcN-DgcA pathway. Catalyzes the transfer of the acetyl moiety from acetyl-CoA to D-glutamate to generate N-acetyl-D-glutamate. Can also acetylate D-aspartate and D-glutamine, with lower efficiency. Has low activity with D-asparagine. Cannot use succinyl-CoA. The polypeptide is D-glutamate N-acetyltransferase (Pseudoalteromonas sp).